We begin with the raw amino-acid sequence, 506 residues long: Glutamate--tRNA ligase (506 aa).

Residues 29-39 (PSPTGTPHVGL) carry the 'HIGH' region motif. The 'KMSKS' region motif lies at 273–277 (KLSKR). Residue Lys-276 participates in ATP binding.

This sequence belongs to the class-I aminoacyl-tRNA synthetase family. Glutamate--tRNA ligase type 1 subfamily. In terms of assembly, monomer.

It localises to the cytoplasm. It carries out the reaction tRNA(Glu) + L-glutamate + ATP = L-glutamyl-tRNA(Glu) + AMP + diphosphate. Functionally, catalyzes the attachment of glutamate to tRNA(Glu) in a two-step reaction: glutamate is first activated by ATP to form Glu-AMP and then transferred to the acceptor end of tRNA(Glu). The polypeptide is Glutamate--tRNA ligase (Paenarthrobacter aurescens (strain TC1)).